We begin with the raw amino-acid sequence, 142 residues long: Large ribosomal subunit protein uL13 (142 aa).

Belongs to the universal ribosomal protein uL13 family. In terms of assembly, part of the 50S ribosomal subunit.

In terms of biological role, this protein is one of the early assembly proteins of the 50S ribosomal subunit, although it is not seen to bind rRNA by itself. It is important during the early stages of 50S assembly. The polypeptide is Large ribosomal subunit protein uL13 (Pelobacter propionicus (strain DSM 2379 / NBRC 103807 / OttBd1)).